The following is a 676-amino-acid chain: Envelope glycoprotein (676 aa).

The signal sequence occupies residues 1–32 (MGASGILQLPRERFRKTSFFVWVIILFHKVFS). Over 33-650 (IPLGVVHNNT…GSNWWTGWKQ (618 aa)) the chain is Extracellular. The N-linked (GlcNAc...) asparagine; by host glycan is linked to Asn40. Intrachain disulfides connect Cys53–Cys609, Cys108–Cys135, Cys121–Cys147, Cys511–Cys556, and Cys601–Cys608. A receptor-binding region spans residues 54–201 (RDKLSSTSQL…DFFQSPPLHE (148 aa)). Asn204, Asn228, Asn257, Asn268, and Asn296 each carry an N-linked (GlcNAc...) asparagine; by host glycan. A mucin-like region region spans residues 305–485 (ELSFVPVPET…LSGPGFLTNT (181 aa)). Residues 356–463 (IKGKDTMPTT…PTTLPEQHTA (108 aa)) form a disordered region. The segment covering 361 to 374 (TMPTTVTGVPTTTP) has biased composition (low complexity). Residues 402–422 (TTQPAKTTSQPTNSTESTTLN) show a composition bias toward polar residues. Residue Asn414 is glycosylated (N-linked (GlcNAc...) asparagine; by host). Positions 423–440 (PTSEPSSRGTGPSSPTVP) are enriched in low complexity. Asn441 carries an N-linked (GlcNAc...) asparagine; by host glycan. The span at 452-463 (TTPTTLPEQHTA) shows a compositional bias: polar residues. Positions 524 to 539 (GAAIGLAWIPYFGPAA) are fusion peptide. Residues 554 to 595 (LICGLRQLANETTQALQLFLRATTELRTFSILNRKAIDFLLQ) are a coiled coil. The N-linked (GlcNAc...) asparagine; by host glycan is linked to Asn563. The stretch at 615-634 (WTKNITDKIDQIIHDFVDNN) forms a coiled coil. An N-linked (GlcNAc...) asparagine; by host glycan is attached at Asn618. Residues 651–671 (WVPAGIGITGVIIAIIALLCI) form a helical membrane-spanning segment. S-palmitoyl cysteine; by host attachment occurs at residues Cys670 and Cys672. Residues 672–676 (CKFML) lie on the Cytoplasmic side of the membrane.

Belongs to the filoviruses glycoprotein family. In terms of assembly, homotrimer; each monomer consists of a GP1 and a GP2 subunit linked by disulfide bonds. The resulting peplomers (GP1,2) protrude from the virus surface as spikes. GP1 and GP2delta are part of GP1,2delta soluble complexes released by ectodomain shedding. GP1,2 interacts with host integrin ITGAV/alpha-V and CLEC10A. Also binds human CD209 and CLEC4M (collectively referred to as DC-SIGN(R)), as well as human FOLR1. Interacts with host entry receptor NPC1. In terms of processing, the signal peptide region modulates GP's high mannose glycosylation, thereby determining the efficiency of the interactions with DC-SIGN(R). N-glycosylated. Post-translationally, O-glycosylated in the mucin-like region. In terms of processing, palmitoylation of GP2 is not required for its function. Specific enzymatic cleavages in vivo yield mature proteins. The precursor is processed into GP1 and GP2 by host cell furin in the trans Golgi, and maybe by other host proteases, to yield the mature GP1 and GP2 proteins. The cleavage site corresponds to the furin optimal cleavage sequence [KR]-X-[KR]-R. This cleavage does not seem to be required for function. After the internalization of the virus into cell endosomes, GP1 C-terminus is removed by the endosomal proteases cathepsin B, cathepsin L, or both, leaving a 19-kDa N-terminal fragment which is further digested by cathepsin B. Proteolytic processing of GP1,2 by host ADAM17 can remove the transmembrane anchor of GP2 and leads to shedding of complexes consisting in GP1 and truncated GP2 (GP1,2delta).

It is found in the virion membrane. The protein resides in the host cell membrane. The protein localises to the secreted. In terms of biological role, GP1 is responsible for binding to the receptor(s) on target cells. Interacts with CD209/DC-SIGN and CLEC4M/DC-SIGNR which act as cofactors for virus entry into the host cell. Binding to CD209 and CLEC4M, which are respectively found on dendritic cells (DCs), and on endothelial cells of liver sinusoids and lymph node sinuses, facilitate infection of macrophages and endothelial cells. These interactions not only facilitate virus cell entry, but also allow capture of viral particles by DCs and subsequent transmission to susceptible cells without DCs infection (trans infection). Binding to the macrophage specific lectin CLEC10A also seems to enhance virus infectivity. Interaction with FOLR1/folate receptor alpha may be a cofactor for virus entry in some cell types, although results are contradictory. Members of the Tyro3 receptor tyrosine kinase family also seem to be cell entry factors in filovirus infection. Once attached, the virions are internalized through clathrin-dependent endocytosis and/or macropinocytosis. After internalization of the virus into the endosomes of the host cell, proteolysis of GP1 by two cysteine proteases, CTSB/cathepsin B and CTSL/cathepsin L presumably induces a conformational change of GP2, unmasking its fusion peptide and initiating membranes fusion. Functionally, GP2 acts as a class I viral fusion protein. Under the current model, the protein has at least 3 conformational states: pre-fusion native state, pre-hairpin intermediate state, and post-fusion hairpin state. During viral and target cell membrane fusion, the coiled coil regions (heptad repeats) assume a trimer-of-hairpins structure, positioning the fusion peptide in close proximity to the C-terminal region of the ectodomain. The formation of this structure appears to drive apposition and subsequent fusion of viral and target cell membranes. Responsible for penetration of the virus into the cell cytoplasm by mediating the fusion of the membrane of the endocytosed virus particle with the endosomal membrane. Low pH in endosomes induces an irreversible conformational change in GP2, releasing the fusion hydrophobic peptide. Its function is as follows. GP1,2 which is the disulfid-linked complex of GP1 and GP2, mediates endothelial cell activation and decreases endothelial barrier function. Mediates activation of primary macrophages. At terminal stages of the viral infection, when its expression is high, GP1,2 down-modulates the expression of various host cell surface molecules that are essential for immune surveillance and cell adhesion. Down-modulates integrins ITGA1, ITGA2, ITGA3, ITGA4, ITGA5, ITGA6, ITGAV and ITGB1. GP1,2 alters the cellular recycling of the dimer alpha-V/beta-3 via a dynamin-dependent pathway. Decrease in the host cell surface expression of various adhesion molecules may lead to cell detachment, contributing to the disruption of blood vessel integrity and hemorrhages developed during Ebola virus infection (cytotoxicity). This cytotoxicity appears late in the infection, only after the massive release of viral particles by infected cells. Down-modulation of host MHC-I, leading to altered recognition by immune cells, may explain the immune suppression and inflammatory dysfunction linked to Ebola infection. Also down-modulates EGFR surface expression. Counteracts the antiviral effect of host tetherin. GP2delta is part of the complex GP1,2delta released by host ADAM17 metalloprotease. This secreted complex may play a role in the pathogenesis of the virus by efficiently blocking the neutralizing antibodies that would otherwise neutralize the virus surface glycoproteins GP1,2. Might therefore contribute to the lack of inflammatory reaction seen during infection in spite the of extensive necrosis and massive virus production. GP1,2delta does not seem to be involved in activation of primary macrophages. This chain is Envelope glycoprotein (GP), found in Tai Forest ebolavirus (strain Cote d'Ivoire-94) (TAFV).